The following is a 578-amino-acid chain: Putative multidrug export ATP-binding/permease protein SA1683 (578 aa).

The Cytoplasmic segment spans residues 1–15 (MIKRYLQFVKPYKYR). A helical membrane pass occupies residues 16-36 (IFATIIVGIIKFGIPMLIPLL). In terms of domain architecture, ABC transmembrane type-1 spans 16-306 (IFATIIVGII…LVASFTTLTQ (291 aa)). Topologically, residues 37-59 (IKYAIDGVINNHALTTDEKVHHL) are extracellular. The helical transmembrane segment at 60–80 (TIAIGIALFIFVIVRPPIEFI) threads the bilayer. Residues 81–138 (RQYLAQWTSNKILYDIRKKLYNHLQALSARFYANNQVGQVISRVINDVEQTKDFILTG) are Cytoplasmic-facing. Residues 139-159 (LMNIWLDCITIIIALSIMFFL) traverse the membrane as a helical segment. The Extracellular portion of the chain corresponds to 160-162 (DVK). Residues 163–183 (LTLAALFIFPFYILTVYVFFG) traverse the membrane as a helical segment. The Cytoplasmic segment spans residues 184 to 244 (RLRKLTRERS…TRALKHTRWN (61 aa)). The helical transmembrane segment at 245–263 (AYSFAAINTVTDIGPIIVI) threads the bilayer. Residues 264-269 (GVGAYL) are Extracellular-facing. Residues 270–287 (AISGSITVGTLAAFVGYL) traverse the membrane as a helical segment. Topologically, residues 288 to 578 (ELLFGPLRRL…YEHLYSIQNL (291 aa)) are cytoplasmic. The 236-residue stretch at 340-575 (IDIDHVSFQY…QGAYEHLYSI (236 aa)) folds into the ABC transporter domain. 374–381 (GMSGGGKS) serves as a coordination point for ATP.

The protein belongs to the ABC transporter superfamily. In terms of assembly, homodimer.

It is found in the cell membrane. Functionally, may be involved in multidrug export. Transmembrane domains (TMD) form a pore in the cell membrane and the ATP-binding domain (NBD) is responsible for energy generation. This is Putative multidrug export ATP-binding/permease protein SA1683 from Staphylococcus aureus (strain N315).